We begin with the raw amino-acid sequence, 366 residues long: Glucan organizing enzyme 1 (366 aa).

Over 1 to 24 (MLPLWARGGKPIVIPLPQKRHITL) the chain is Extracellular. The chain crosses the membrane as a helical span at residues 25–45 (PALPILLLLLGTGFLLHSLFF). Over 46 to 366 (PPPPPHPPGK…ETYKKWKRGH (321 aa)) the chain is Cytoplasmic.

It belongs to the glycosyltransferase 32 family.

The protein localises to the cell membrane. In terms of biological role, plays a role in the localization of glycogen rosettes to the plasma membrane. Required for correct cell wall organization and may facilitate the connection between beta-1,3-glucan and beta-1,6-glucan in the cell wall. In Cryptococcus neoformans var. grubii serotype A (strain H99 / ATCC 208821 / CBS 10515 / FGSC 9487) (Filobasidiella neoformans var. grubii), this protein is Glucan organizing enzyme 1.